The primary structure comprises 669 residues: DNA mismatch repair protein MutL (669 aa).

The tract at residues 343–408 (SAFHRAEPEE…RAPSDSSVRE (66 aa)) is disordered. Basic and acidic residues predominate over residues 344 to 356 (AFHRAEPEERESQ). The span at 357-372 (PETTPQYSPQSVSTTV) shows a compositional bias: polar residues. A compositionally biased stretch (basic and acidic residues) spans 390–408 (TDYEIKPRDRAPSDSSVRE).

Belongs to the DNA mismatch repair MutL/HexB family.

This protein is involved in the repair of mismatches in DNA. It is required for dam-dependent methyl-directed DNA mismatch repair. May act as a 'molecular matchmaker', a protein that promotes the formation of a stable complex between two or more DNA-binding proteins in an ATP-dependent manner without itself being part of a final effector complex. The polypeptide is DNA mismatch repair protein MutL (Vibrio parahaemolyticus serotype O3:K6 (strain RIMD 2210633)).